The sequence spans 132 residues: UPF0329 protein ECU07_0050/ECU09_2020 (132 aa).

The protein belongs to the UPF0329 family.

This Encephalitozoon cuniculi (strain GB-M1) (Microsporidian parasite) protein is UPF0329 protein ECU07_0050/ECU09_2020.